We begin with the raw amino-acid sequence, 279 residues long: 4-diphosphocytidyl-2-C-methyl-D-erythritol kinase (279 aa).

Lys11 is a catalytic residue. 95 to 105 (PVAAGLGGGSS) lines the ATP pocket. Asp137 is a catalytic residue.

Belongs to the GHMP kinase family. IspE subfamily.

The catalysed reaction is 4-CDP-2-C-methyl-D-erythritol + ATP = 4-CDP-2-C-methyl-D-erythritol 2-phosphate + ADP + H(+). It functions in the pathway isoprenoid biosynthesis; isopentenyl diphosphate biosynthesis via DXP pathway; isopentenyl diphosphate from 1-deoxy-D-xylulose 5-phosphate: step 3/6. Functionally, catalyzes the phosphorylation of the position 2 hydroxy group of 4-diphosphocytidyl-2C-methyl-D-erythritol. In Geotalea daltonii (strain DSM 22248 / JCM 15807 / FRC-32) (Geobacter daltonii), this protein is 4-diphosphocytidyl-2-C-methyl-D-erythritol kinase.